A 372-amino-acid chain; its full sequence is uncharacterized protein (372 aa).

Tyr-4 to Tyr-18 is a binding site for FAD.

The protein belongs to the DadA oxidoreductase family. It depends on FAD as a cofactor.

This is an uncharacterized protein from Bacillus subtilis (strain 168).